A 575-amino-acid chain; its full sequence is Proline--tRNA ligase (575 aa).

It belongs to the class-II aminoacyl-tRNA synthetase family. ProS type 1 subfamily. Homodimer.

Its subcellular location is the cytoplasm. It carries out the reaction tRNA(Pro) + L-proline + ATP = L-prolyl-tRNA(Pro) + AMP + diphosphate. Functionally, catalyzes the attachment of proline to tRNA(Pro) in a two-step reaction: proline is first activated by ATP to form Pro-AMP and then transferred to the acceptor end of tRNA(Pro). As ProRS can inadvertently accommodate and process non-cognate amino acids such as alanine and cysteine, to avoid such errors it has two additional distinct editing activities against alanine. One activity is designated as 'pretransfer' editing and involves the tRNA(Pro)-independent hydrolysis of activated Ala-AMP. The other activity is designated 'posttransfer' editing and involves deacylation of mischarged Ala-tRNA(Pro). The misacylated Cys-tRNA(Pro) is not edited by ProRS. In Heliobacterium modesticaldum (strain ATCC 51547 / Ice1), this protein is Proline--tRNA ligase.